The primary structure comprises 160 residues: Myosin regulatory light chain, smooth muscle (160 aa).

Ser-1 is subject to Blocked amino end (Ser). Ser-11 bears the Phosphoserine mark. 2 EF-hand domains span residues 20–55 (NQIQEMKEAFTMIDQNRDGLIDVSDLKEMYSNLGTA) and 88–123 (DPEETLRNAFQMFDSDNTGYIPEEYMKDLLENMGDN). Ca(2+) is bound by residues Asp-33, Asn-35, Asp-37, and Asp-44.

Functionally, in molluscan muscle, calcium regulation is associated with myosin rather than with actin. Muscle myosin contains two types of light chains: the catalytic light chain, essential for ATPase activity, and the regulatory light chain, a calcium-binding protein responsible for Ca(2+) dependent binding and Ca(2+) dependent Mg-ATPase activity. The chain is Myosin regulatory light chain, smooth muscle from Spisula sachalinensis (Sakhalin surf-clam).